We begin with the raw amino-acid sequence, 438 residues long: Glutamyl-tRNA(Gln) amidotransferase subunit D (438 aa).

Residues 92-422 form the Asparaginase/glutaminase domain; that stretch reads PEVTIIGTGG…EEVRKMMLTN (331 aa). Catalysis depends on residues T102, T178, D179, and K256.

This sequence belongs to the asparaginase 1 family. GatD subfamily. As to quaternary structure, heterodimer of GatD and GatE.

It carries out the reaction L-glutamyl-tRNA(Gln) + L-glutamine + ATP + H2O = L-glutaminyl-tRNA(Gln) + L-glutamate + ADP + phosphate + H(+). Allows the formation of correctly charged Gln-tRNA(Gln) through the transamidation of misacylated Glu-tRNA(Gln) in organisms which lack glutaminyl-tRNA synthetase. The reaction takes place in the presence of glutamine and ATP through an activated gamma-phospho-Glu-tRNA(Gln). The GatDE system is specific for glutamate and does not act on aspartate. The protein is Glutamyl-tRNA(Gln) amidotransferase subunit D of Pyrococcus abyssi (strain GE5 / Orsay).